Reading from the N-terminus, the 655-residue chain is Sphingomyelin phosphodiesterase 3 (655 aa).

Residues 1-10 lie on the Cytoplasmic side of the membrane; sequence MVLYTTPFPN. The segment at residues 11–31 is an intramembrane region (helical); the sequence is SCLSALHCVSWALIFPCYWLV. The Cytoplasmic segment spans residues 32–64; it reads DRLAASFIPTTYEKRQRADDPCCLQLLCTALFT. Residues Cys53, Cys54, and Cys59 are each lipidated (S-palmitoyl cysteine). The segment at residues 65–85 is an intramembrane region (helical); sequence PIYLALLVASLPFAFLGFLFW. Residues 86 to 655 lie on the Cytoplasmic side of the membrane; it reads SPLQSARRPY…LMVSSGEEEA (570 aa). Phosphoserine is present on Ser178. Positions 210–319 are disordered; sequence VEYKGDGGRH…DTSASGEPGA (110 aa). 2 stretches are compositionally biased toward basic and acidic residues: residues 212–222 and 248–257; these read YKGDGGRHPGD and GGEEGGRPPE. A compositionally biased stretch (polar residues) spans 279–299; sequence TPNHNQQDGDSGSLGSPSASR. A Phosphoserine modification is found at Ser291. Glu364 is a binding site for Mg(2+). Residues Cys397 and Cys398 are each lipidated (S-palmitoyl cysteine). His639 (proton acceptor) is an active-site residue.

Belongs to the neutral sphingomyelinase family. Mg(2+) serves as cofactor. Palmitoylated, palmitoylation-deficient proteins are targeted for lysosomal degradation. In terms of tissue distribution, predominantly expressed in brain.

It localises to the golgi apparatus membrane. It is found in the cell membrane. It catalyses the reaction a sphingomyelin + H2O = phosphocholine + an N-acylsphing-4-enine + H(+). The catalysed reaction is N-(15Z-tetracosenoyl)sphing-4-enine-1-phosphocholine + H2O = N-(15Z-tetracosenoyl)-sphing-4-enine + phosphocholine + H(+). The enzyme catalyses N-(tetracosanoyl)-sphing-4-enine-1-phosphocholine + H2O = N-tetracosanoyl-sphing-4-enine + phosphocholine + H(+). It carries out the reaction an N-(acyl)-sphingosylphosphocholine + H2O = an N-acyl-sphingoid base + phosphocholine + H(+). It catalyses the reaction 1-hexadecanoyl-sn-glycero-3-phosphocholine + H2O = 1-hexadecanoyl-sn-glycerol + phosphocholine + H(+). The catalysed reaction is 1-O-octadecyl-sn-glycero-3-phosphocholine + H2O = 1-O-octadecyl-sn-glycerol + phosphocholine + H(+). The enzyme catalyses a sphingosylphosphocholine + H2O = a sphingoid base + phosphocholine + H(+). It carries out the reaction N-(hexadecanoyl)-sphing-4-enine-1-phosphocholine + H2O = N-hexadecanoylsphing-4-enine + phosphocholine + H(+). Its pathway is lipid metabolism; sphingolipid metabolism. With respect to regulation, inhibited by nSMase inhibitor GW4869. Binding of anionic phospholipids (APLs) such as phosphatidylserine (PS) and phosphatidic acid (PA) increases enzymatic activity. In terms of biological role, catalyzes the hydrolysis of sphingomyelin to form ceramide and phosphocholine. Ceramide mediates numerous cellular functions, such as apoptosis and growth arrest, and is capable of regulating these 2 cellular events independently. Also hydrolyzes sphingosylphosphocholine. Regulates the cell cycle by acting as a growth suppressor in confluent cells. Probably acts as a regulator of postnatal development and participates in bone and dentin mineralization. Binds to anionic phospholipids (APLs) such as phosphatidylserine (PS) and phosphatidic acid (PA) that modulate enzymatic activity and subcellular location. May be involved in IL-1-beta-induced JNK activation in hepatocytes. May act as a mediator in transcriptional regulation of NOS2/iNOS via the NF-kappa-B activation under inflammatory conditions. This is Sphingomyelin phosphodiesterase 3 from Homo sapiens (Human).